A 716-amino-acid chain; its full sequence is Probable extracellular serine carboxypeptidase (716 aa).

The signal sequence occupies residues 1–17 (MVKLTACLLLLVAAVQA). Asn143 and Asn174 each carry an N-linked (GlcNAc...) asparagine glycan. The active-site Charge relay system is the Ser188. Asn258 and Asn354 each carry an N-linked (GlcNAc...) asparagine glycan. The Charge relay system role is filled by Asp466. Asn507 and Asn550 each carry an N-linked (GlcNAc...) asparagine glycan. Residues 617–636 (RDLAAQPSKSKKDRRGQQLS) are disordered. Residues 652–672 (LGFVSFLVFAFSSFTFIPDIE) traverse the membrane as a helical segment.

It belongs to the peptidase S28 family.

It is found in the membrane. It localises to the secreted. This chain is Probable extracellular serine carboxypeptidase, found in Arthroderma benhamiae (strain ATCC MYA-4681 / CBS 112371) (Trichophyton mentagrophytes).